The following is a 2696-amino-acid chain: Protein ILITYHIA (2696 aa).

Residues 1-18 (MSYSMVNASSAVSSPETA) are compositionally biased toward polar residues. Residues 1 to 26 (MSYSMVNASSAVSSPETAKNSDEPPP) form a disordered region. HEAT repeat units follow at residues 162–204 (DIAP…MKTF), 253–290 (STQA…IYSL), 303–340 (KDSP…DVLN), 364–400 (EFQT…IDLS), 401–438 (KYAL…KSSN), 487–525 (SLSR…RSSV), 526–562 (AIQP…NPDT), 564–601 (SQIS…SKIA), and 642–677 (VVCV…FLLC). Positions 901–941 (KQEPSSNHSLKKGLASRETANSGRRDTAKLTKKADKGKTAK) are disordered. The span at 923–941 (GRRDTAKLTKKADKGKTAK) shows a compositional bias: basic and acidic residues. HEAT repeat units follow at residues 985-1021 (HSQL…CTVQ), 1082-1118 (DTFT…GLQA), 1188-1225 (HDLG…ESPS), 1273-1311 (KDLP…KHGK), 1315-1355 (SLLF…HLAR), 1358-1395 (PKVH…SKQE), 1397-1433 (APAL…GFGI), 1436-1474 (LKKY…KLGK), 1478-1515 (PYVI…QLSA), 1516-1553 (YGVK…CAPQ), 1564-1600 (PKLT…VIKN), 1601-1638 (PEIS…NSVD), 1640-1677 (PSLA…LVTE), 1683-1720 (PYIG…GMGE), 1722-1759 (NFPD…ALGT), 1761-1797 (YFEN…SLGA), 1801-1838 (KYLQ…HHAT), and 1840-1876 (SLPL…KVAG). Residue S1887 is modified to Phosphoserine. HEAT repeat units follow at residues 1908–1945 (DKRN…NTPK), 1949–1986 (EIMP…KLGE), 1988–2024 (VLPL…SAGR), 2029–2066 (SFMD…SAGL), 2067–2102 (QAMD…VRTA), 2104–2137 (VLPH…AGFN), 2138–2175 (THLG…VIDE), 2177–2213 (GVET…SSKL), 2217–2254 (DEAP…SVPK), 2258–2292 (PSYI…LCLP), 2293–2330 (KSLK…VTSE), 2335–2373 (EFVI…RGGM), 2377–2414 (PFLP…LSTR), 2416–2450 (DPLV…HAGK), 2455–2492 (AVRV…YLEA), 2494–2530 (QLSV…HNPS), 2536–2573 (SLFS…KQLA), 2580–2617 (KVVI…DNPS), and 2620–2658 (MANI…LTKG).

Belongs to the GCN1 family.

In terms of biological role, involved in immunity against bacterial infection and in non-host resistance. Required for embryo development. Required for systemic acquired resistance, but functions in an salicylic acid-independent manner. Required for bacterium-triggered stomatal closure response. In Arabidopsis thaliana (Mouse-ear cress), this protein is Protein ILITYHIA.